A 338-amino-acid polypeptide reads, in one-letter code: MKISIYGAGNQRLYLEQLKVPEKFGGEPPYGGAGMAIEFAKAGHDVVLSEPNRDVMSDDLWKKVEDAGVKVVSDDIEAAKHGEIHVLFTPFGRITLNIANTIIEHVPENAIICNTCTIPTPVLYRSLEGILRLKRRDVGISSMHPTGVPGTPSQKYYTIAGKALEGKEYATEDQINKLVELVKSVGKIPYVTPADVVPAVADMGALVTAVALVGVLDYYRVGTQIINAPKDMIEKQILISLQTIASIIETSGMEGLMKVFNKDALLSSAKNMLIDERQEDLNLALKIIEEFDKSTIGEKDISQTYLVAPQALIKEAVSLIGKSAVEGMIRRSSNKLFK.

Belongs to the HMD family.

The polypeptide is H(2)-forming methylenetetrahydromethanopterin dehydrogenase-related protein MJ0715 (Methanocaldococcus jannaschii (strain ATCC 43067 / DSM 2661 / JAL-1 / JCM 10045 / NBRC 100440) (Methanococcus jannaschii)).